Consider the following 205-residue polypeptide: Small ribosomal subunit protein uS4 (205 aa).

Positions 19 to 45 (IWGRPKSPVNRREYGPGQHGQRRKGKL) are disordered. The S4 RNA-binding domain occupies 94–157 (SRLDAVVYRA…KQLAIVLEAV (64 aa)).

Belongs to the universal ribosomal protein uS4 family. Part of the 30S ribosomal subunit. Contacts protein S5. The interaction surface between S4 and S5 is involved in control of translational fidelity.

Functionally, one of the primary rRNA binding proteins, it binds directly to 16S rRNA where it nucleates assembly of the body of the 30S subunit. With S5 and S12 plays an important role in translational accuracy. This chain is Small ribosomal subunit protein uS4, found in Brucella melitensis biotype 2 (strain ATCC 23457).